A 353-amino-acid chain; its full sequence is Ribosome biogenesis protein BRX1 homolog (353 aa).

Basic residues predominate over residues 1 to 10; it reads MAATKRKRRG. The segment at 1-46 is disordered; the sequence is MAATKRKRRGGFAVQAKKPKRNEKDAEPPAKRHATAEEVEEEERDR. The segment covering 22–36 has biased composition (basic and acidic residues); it reads NEKDAEPPAKRHATA. The region spanning 60–249 is the Brix domain; that stretch reads ERILIFSSRG…LIKIFQGSFG (190 aa). Residue lysine 160 forms a Glycyl lysine isopeptide (Lys-Gly) (interchain with G-Cter in SUMO2) linkage. Serine 261 carries the phosphoserine modification. Lysine 276 carries the post-translational modification N6-acetyllysine. Glycyl lysine isopeptide (Lys-Gly) (interchain with G-Cter in SUMO2) cross-links involve residues lysine 314 and lysine 322.

Belongs to the BRX1 family.

Its subcellular location is the nucleus. It is found in the nucleolus. In terms of biological role, required for biogenesis of the 60S ribosomal subunit. This is Ribosome biogenesis protein BRX1 homolog (BRIX1) from Pongo abelii (Sumatran orangutan).